A 249-amino-acid chain; its full sequence is Seipin homolog (249 aa).

The Cytoplasmic portion of the chain corresponds to 1-10; sequence MGYLVKLFKL. A helical membrane pass occupies residues 11 to 31; that stretch reads VVWMLVIGLFSIPSLVSYVIF. Over 32–212 the chain is Lumenal; the sequence is YDTVIPHSVI…GMRWFMYTHK (181 aa). Residues 213-233 traverse the membrane as a helical segment; sequence VSAFLVFTSLFWFTGITSTII. Topologically, residues 234 to 249 are cytoplasmic; sequence TYLIVSSTSETKATRR.

Belongs to the seipin family.

It is found in the endoplasmic reticulum membrane. Functionally, involved in lipid metabolism and lipid droplet (LD) morphology, number, and size. Facilitates initiation of LD formation, and ensures that vectorial budding of LDs from the ER is directed towards the cytoplasm. In Schizosaccharomyces pombe (strain 972 / ATCC 24843) (Fission yeast), this protein is Seipin homolog.